A 140-amino-acid polypeptide reads, in one-letter code: Small ribosomal subunit protein uS19 (140 aa).

The disordered stretch occupies residues Ile43–Ile71. The segment covering Gln52–Pro63 has biased composition (basic and acidic residues).

This sequence belongs to the universal ribosomal protein uS19 family.

Its function is as follows. Protein S19 forms a complex with S13 that binds strongly to the 16S ribosomal RNA. This is Small ribosomal subunit protein uS19 from Haloquadratum walsbyi (strain DSM 16790 / HBSQ001).